The following is a 249-amino-acid chain: Orotidine 5'-phosphate decarboxylase (249 aa).

Substrate is bound by residues Asp-18, Lys-40, 67–76 (DLKYHDIPNT), Thr-127, Arg-188, Gln-197, Gly-217, and Arg-218. The active-site Proton donor is the Lys-69.

It belongs to the OMP decarboxylase family. Type 1 subfamily. In terms of assembly, homodimer.

It catalyses the reaction orotidine 5'-phosphate + H(+) = UMP + CO2. The protein operates within pyrimidine metabolism; UMP biosynthesis via de novo pathway; UMP from orotate: step 2/2. In terms of biological role, catalyzes the decarboxylation of orotidine 5'-monophosphate (OMP) to uridine 5'-monophosphate (UMP). This chain is Orotidine 5'-phosphate decarboxylase, found in Baumannia cicadellinicola subsp. Homalodisca coagulata.